Consider the following 342-residue polypeptide: tRNA N6-adenosine threonylcarbamoyltransferase (342 aa).

Fe cation contacts are provided by His-114 and His-118. Residues 136 to 140 (LVSGG), Asp-169, Gly-182, Asp-186, and Asn-275 each bind substrate. Fe cation is bound at residue Asp-301.

The protein belongs to the KAE1 / TsaD family. Fe(2+) is required as a cofactor.

The protein resides in the cytoplasm. It catalyses the reaction L-threonylcarbamoyladenylate + adenosine(37) in tRNA = N(6)-L-threonylcarbamoyladenosine(37) in tRNA + AMP + H(+). Functionally, required for the formation of a threonylcarbamoyl group on adenosine at position 37 (t(6)A37) in tRNAs that read codons beginning with adenine. Is involved in the transfer of the threonylcarbamoyl moiety of threonylcarbamoyl-AMP (TC-AMP) to the N6 group of A37, together with TsaE and TsaB. TsaD likely plays a direct catalytic role in this reaction. The chain is tRNA N6-adenosine threonylcarbamoyltransferase from Streptococcus pyogenes serotype M3 (strain ATCC BAA-595 / MGAS315).